A 90-amino-acid chain; its full sequence is Phenol 2-monooxygenase, stimulatory component DmpM (90 aa).

It belongs to the TmoD/XamoD family. As to quaternary structure, active as a monomer. Formation of dimers inactivates the protein. The multicomponent enzyme phenol hydroxylase is formed by DmpL (P1 component), DmpM (P2 component), DmpN (P3 component), DmpO (P4 component) and DmpP (P5 component).

The enzyme catalyses phenol + NADH + O2 + H(+) = catechol + NAD(+) + H2O. It functions in the pathway aromatic compound metabolism; phenol degradation. Functionally, part of a multicomponent enzyme which catalyzes the degradation of phenol and some of its methylated derivatives. DmpM is a regulatory subunit that stimulates the phenol hydroxylase activity of the complex. The steady-state rate of phenol hydroxylase turnover is dependent on the DmpM concentration, with a maximum observed rate at about 1.5 DmpM per oxygenase monomer. Higher concentrations of DmpM inhibit phenol hydroxylase activity. May act by altering the redox potential of the oxygenase. Required for growth on phenol and for in vitro phenol hydroxylase activity. The sequence is that of Phenol 2-monooxygenase, stimulatory component DmpM from Pseudomonas sp. (strain CF600).